The primary structure comprises 367 residues: 3-isopropylmalate dehydrogenase (367 aa).

An NAD(+)-binding site is contributed by 80-93 (GKEWTHLPADEQPE). Substrate-binding residues include R101, R111, R140, and D230. Mg(2+) contacts are provided by D230, D254, and D258. 288-300 (GSAPDLKGKNIAN) is a binding site for NAD(+).

The protein belongs to the isocitrate and isopropylmalate dehydrogenases family. LeuB type 1 subfamily. In terms of assembly, homodimer. The cofactor is Mg(2+). Mn(2+) is required as a cofactor.

The protein localises to the cytoplasm. The catalysed reaction is (2R,3S)-3-isopropylmalate + NAD(+) = 4-methyl-2-oxopentanoate + CO2 + NADH. It functions in the pathway amino-acid biosynthesis; L-leucine biosynthesis; L-leucine from 3-methyl-2-oxobutanoate: step 3/4. Functionally, catalyzes the oxidation of 3-carboxy-2-hydroxy-4-methylpentanoate (3-isopropylmalate) to 3-carboxy-4-methyl-2-oxopentanoate. The product decarboxylates to 4-methyl-2 oxopentanoate. The protein is 3-isopropylmalate dehydrogenase (leuB) of Buchnera aphidicola subsp. Cinara cedri (strain Cc).